Reading from the N-terminus, the 128-residue chain is Iron-sulfur cluster insertion protein ErpA (128 aa).

Positions 56, 120, and 122 each coordinate iron-sulfur cluster.

This sequence belongs to the HesB/IscA family. Homodimer. Iron-sulfur cluster is required as a cofactor.

Required for insertion of 4Fe-4S clusters for at least IspG. The polypeptide is Iron-sulfur cluster insertion protein ErpA (Xylella fastidiosa (strain M23)).